Here is a 193-residue protein sequence, read N- to C-terminus: Probable chorismate pyruvate-lyase (193 aa).

Residues Arg81, Leu119, and Glu177 each contribute to the substrate site.

It belongs to the UbiC family.

It localises to the cytoplasm. The enzyme catalyses chorismate = 4-hydroxybenzoate + pyruvate. It participates in cofactor biosynthesis; ubiquinone biosynthesis. Its function is as follows. Removes the pyruvyl group from chorismate, with concomitant aromatization of the ring, to provide 4-hydroxybenzoate (4HB) for the ubiquinone pathway. The polypeptide is Probable chorismate pyruvate-lyase (Idiomarina loihiensis (strain ATCC BAA-735 / DSM 15497 / L2-TR)).